Consider the following 396-residue polypeptide: NADH-quinone oxidoreductase subunit D (396 aa).

This sequence belongs to the complex I 49 kDa subunit family. NDH-1 is composed of 14 different subunits. Subunits NuoB, C, D, E, F, and G constitute the peripheral sector of the complex.

The protein localises to the cell inner membrane. The enzyme catalyses a quinone + NADH + 5 H(+)(in) = a quinol + NAD(+) + 4 H(+)(out). Functionally, NDH-1 shuttles electrons from NADH, via FMN and iron-sulfur (Fe-S) centers, to quinones in the respiratory chain. The immediate electron acceptor for the enzyme in this species is believed to be ubiquinone. Couples the redox reaction to proton translocation (for every two electrons transferred, four hydrogen ions are translocated across the cytoplasmic membrane), and thus conserves the redox energy in a proton gradient. This chain is NADH-quinone oxidoreductase subunit D, found in Rhodopseudomonas palustris (strain BisA53).